We begin with the raw amino-acid sequence, 608 residues long: Afamin (608 aa).

A signal peptide spans 1–21 (MRHLKLTGFIFFLLPLTESLA). Albumin domains are found at residues 22 to 210 (LPTK…APIT), 211 to 403 (QYLK…KFNE), and 404 to 599 (TTQR…KTGD). An N-linked (GlcNAc...) asparagine glycan is attached at N33. Intrachain disulfides connect C77-C86, C99-C114, C113-C124, C148-C193, C192-C201, C224-C270, C269-C277, C289-C303, C302-C313, C340-C385, and C384-C393. A glycan (N-linked (GlcNAc...) asparagine) is linked at N109. Residue N153 is glycosylated (N-linked (GlcNAc...) asparagine). The binding pocket for hydrophobic ligands stretch occupies residues 215 to 319 (ASSSYQRNVC…REACIINANK (105 aa)). A glycan (N-linked (GlcNAc...) asparagine) is linked at N402. Cystine bridges form between C416–C462, C461–C470, C483–C499, C498–C509, and C580–C589. N-linked (GlcNAc...) asparagine glycosylation occurs at N488. Positions 583-608 (VQEPESCFSPESSKTGDESQATEKQR) are disordered. A compositionally biased stretch (basic and acidic residues) spans 596–608 (KTGDESQATEKQR).

This sequence belongs to the ALB/AFP/VDB family. Forms a 1:1 complex with Wnt family members; interacts with WNT1, WNT2B, WNT3, WNT5A, WNT7A, WNT7B, WNT8, WNT9A, WNT9B, WNT10A and WNT10B. Interacts with WNT3A. In terms of processing, N-glycosylated; more than 90% of the glycans are sialylated. In terms of tissue distribution, detected in brain, especially on brain capillaries (at protein level). Expressed in isolated brain capillaries.

The protein resides in the secreted. Functions as a carrier for hydrophobic molecules in body fluids. Essential for the solubility and activity of lipidated Wnt family members, including WNT1, WNT2B, WNT3, WNT3A, WNT5A, WNT7A, WNT7B, WNT8, WNT9A, WNT9B, WNT10A and WNT10B. Binds vitamin E. May transport vitamin E in body fluids under conditions where the lipoprotein system is not sufficient. May be involved in the transport of vitamin E across the blood-brain barrier. This chain is Afamin (Afm), found in Mus musculus (Mouse).